A 495-amino-acid chain; its full sequence is Glutamate--tRNA ligase 1 (495 aa).

Residues P10 to G20 carry the 'HIGH' region motif. Residues K251–R255 carry the 'KMSKS' region motif. K254 is a binding site for ATP.

Belongs to the class-I aminoacyl-tRNA synthetase family. Glutamate--tRNA ligase type 1 subfamily. As to quaternary structure, monomer.

Its subcellular location is the cytoplasm. The enzyme catalyses tRNA(Glu) + L-glutamate + ATP = L-glutamyl-tRNA(Glu) + AMP + diphosphate. In terms of biological role, catalyzes the attachment of glutamate to tRNA(Glu) in a two-step reaction: glutamate is first activated by ATP to form Glu-AMP and then transferred to the acceptor end of tRNA(Glu). The polypeptide is Glutamate--tRNA ligase 1 (Syntrophomonas wolfei subsp. wolfei (strain DSM 2245B / Goettingen)).